A 914-amino-acid chain; its full sequence is Caprin-2 (914 aa).

Disordered regions lie at residues 259 to 283 (PLPK…PSGL), 298 to 326 (EFLN…KEDF), 367 to 411 (KTVD…LPKD), 439 to 480 (DGES…SSQR), 495 to 529 (CLSN…PPLY), 608 to 631 (HRSF…PELN), and 718 to 747 (GAGT…AYPL). The span at 264 to 273 (DSQEKTETIK) shows a compositional bias: basic and acidic residues. Positions 274 to 283 (PDSQSRPSGL) are enriched in polar residues. Residues 370 to 392 (DIVKRSTTDPKEKRQRKKAEQDS) show a composition bias toward basic and acidic residues. The span at 469-480 (KSPSDILPSSQR) shows a compositional bias: polar residues. Positions 508 to 520 (LELHSEDKPRKQA) are enriched in basic and acidic residues. The segment covering 610-626 (SFTSAKTSSVTTASTQT) has biased composition (low complexity). Residues 718-738 (GAGTATQRSSAGWSDSSQVSS) are compositionally biased toward polar residues. Residues 780-914 (LTQLRVAFSA…TFSGFLLYQD (135 aa)) form the C1q domain. Ca(2+) is bound by residues Asp-865 and Glu-871.

It belongs to the caprin family. Homotrimer; via C1q domain.

Its subcellular location is the cytoplasm. The protein resides in the cell membrane. Functionally, promotes phosphorylation of the Wnt coreceptor LRP6, leading to increased activity of the canonical Wnt signaling pathway. Facilitates constitutive LRP6 phosphorylation by CDK14/CCNY during G2/M stage of the cell cycle, which may potentiate cells for Wnt signaling. May regulate the transport and translation of mRNAs, modulating for instance the expression of proteins involved in synaptic plasticity in neurons. Involved in regulation of growth as erythroblasts shift from a highly proliferative state towards their terminal phase of differentiation. May be involved in apoptosis. The sequence is that of Caprin-2 from Danio rerio (Zebrafish).